A 386-amino-acid polypeptide reads, in one-letter code: Probable pectin lyase F (386 aa).

The N-terminal stretch at methionine 1–alanine 16 is a signal peptide. A disulfide bridge connects residues cysteine 77 and cysteine 101. N-linked (GlcNAc...) asparagine glycosylation is present at asparagine 124. Arginine 251 is a catalytic residue. A disulfide bridge links cysteine 326 with cysteine 334.

It belongs to the polysaccharide lyase 1 family.

It localises to the secreted. The enzyme catalyses Eliminative cleavage of (1-&gt;4)-alpha-D-galacturonan methyl ester to give oligosaccharides with 4-deoxy-6-O-methyl-alpha-D-galact-4-enuronosyl groups at their non-reducing ends.. Pectinolytic enzymes consist of four classes of enzymes: pectin lyase, polygalacturonase, pectin methylesterase and rhamnogalacturonase. Among pectinolytic enzymes, pectin lyase is the most important in depolymerization of pectin, since it cleaves internal glycosidic bonds of highly methylated pectins. In Neosartorya fischeri (strain ATCC 1020 / DSM 3700 / CBS 544.65 / FGSC A1164 / JCM 1740 / NRRL 181 / WB 181) (Aspergillus fischerianus), this protein is Probable pectin lyase F (pelF).